Reading from the N-terminus, the 604-residue chain is Prostaglandin G/H synthase 2 (604 aa).

The signal sequence occupies residues methionine 1–alanine 17. Positions alanine 18 to threonine 55 constitute an EGF-like domain. 4 cysteine pairs are disulfide-bonded: cysteine 21–cysteine 32, cysteine 22–cysteine 145, cysteine 26–cysteine 42, and cysteine 44–cysteine 54. Residue asparagine 53 is glycosylated (N-linked (GlcNAc...) asparagine). Arginine 106 is a substrate binding site. An N-linked (GlcNAc...) asparagine glycan is attached at asparagine 130. Histidine 193 serves as the catalytic Proton acceptor. Tyrosine 341 is a binding site for substrate. Tyrosine 371 serves as the catalytic For cyclooxygenase activity. Histidine 374 is a heme b binding site. Asparagine 396 is a glycosylation site (N-linked (GlcNAc...) asparagine). Cysteine 526 carries the post-translational modification S-nitrosocysteine. A disulfide bridge connects residues cysteine 555 and cysteine 561. Asparagine 580 carries N-linked (GlcNAc...) asparagine glycosylation.

This sequence belongs to the prostaglandin G/H synthase family. As to quaternary structure, homodimer. Heme b is required as a cofactor. S-nitrosylation by NOS2 (iNOS) activates enzyme activity. S-nitrosylation may take place on different Cys residues in addition to Cys-526.

It is found in the microsome membrane. The protein resides in the endoplasmic reticulum membrane. It localises to the nucleus inner membrane. Its subcellular location is the nucleus outer membrane. It carries out the reaction (5Z,8Z,11Z,14Z)-eicosatetraenoate + AH2 + 2 O2 = prostaglandin H2 + A + H2O. The catalysed reaction is (5Z,8Z,11Z,14Z)-eicosatetraenoate + 2 O2 = prostaglandin G2. It catalyses the reaction prostaglandin G2 + AH2 = prostaglandin H2 + A + H2O. The enzyme catalyses (5Z,8Z,11Z,14Z,17Z)-eicosapentaenoate + 2 O2 = prostaglandin G3. It carries out the reaction prostaglandin G3 + AH2 = prostaglandin H3 + A + H2O. The catalysed reaction is (8Z,11Z,14Z)-eicosatrienoate + 2 O2 = prostaglandin G1. It catalyses the reaction prostaglandin G1 + AH2 = prostaglandin H1 + A + H2O. The enzyme catalyses 2-(5Z,8Z,11Z,14Z)-eicosatetraenoyl-sn-glycero-3-phosphoethanolamine + 2 O2 = 2-(prostaglandin G2)-sn-glycero-3-phosphoethanolamine. It carries out the reaction 2-(prostaglandin G2)-sn-glycero-3-phosphoethanolamine + AH2 = 2-(prostaglandin H2)-sn-glycero-3-phosphoethanolamine + A + H2O. The catalysed reaction is 2-(5Z,8Z,11Z,14Z)-eicosatetraenoyl-sn-glycero-3-phosphocholine + 2 O2 = 2-(prostaglandin G2)-sn-glycero-3-phosphocholine. It catalyses the reaction 2-(prostaglandin G2)-sn-glycero-3-phosphocholine + AH2 = 2-(prostaglandin H2)-sn-glycero-3-phosphocholine + A + H2O. The enzyme catalyses (15S)-hydroperoxy-(5Z,8Z,11Z,13E)-eicosatetraenoate + AH2 = (15S)-hydroxy-(5Z,8Z,11Z,13E)-eicosatetraenoate + A + H2O. It carries out the reaction 2-(5Z,8Z,11Z,14Z)-eicosatetraenoyl-sn-glycero-3-phosphocholine + AH2 + O2 = 2-[(15S)-hydroxy-(5Z,8Z,11Z,13E)-eicosatetraenoyl]-sn-glycero-3-phosphocholine + A + H2O. The catalysed reaction is 2-(5Z,8Z,11Z,14Z)-eicosatetraenoyl-sn-glycero-3-phosphocholine + AH2 + O2 = 2-[(15R)-hydroxy-(5Z,8Z,11Z,13E)-eicosatetraenoyl]-sn-glycero-3-phosphocholine + A + H2O. It catalyses the reaction 2-(5Z,8Z,11Z,14Z)-eicosatetraenoyl-sn-glycero-3-phosphocholine + AH2 + O2 = 2-[(11R)-hydroxy-(5Z,8Z,12E,14Z)-eicosatetraenoyl]-sn-glycero-3-phosphocholine + A + H2O. The enzyme catalyses (9Z,12Z)-octadecadienoate + AH2 + O2 = 9-hydroxy-(10E,12Z)-octadecadienoate + A + H2O. It carries out the reaction (9Z,12Z)-octadecadienoate + AH2 + O2 = 13-hydroxy-(9Z,11E)-octadecadienoate + A + H2O. The catalysed reaction is (5Z,8Z,11Z,14Z)-eicosatetraenoate + AH2 + O2 = (15R)-hydroxy-(5Z,8Z,11Z,13E)-eicosatetraenoate + A + H2O. It catalyses the reaction (5Z,8Z,11Z,14Z)-eicosatetraenoate + AH2 + O2 = (11R)-hydroxy-(5Z,8Z,12E,14Z)-eicosatetraenoate + A + H2O. The enzyme catalyses (5Z,8Z,11Z,14Z,17Z)-eicosapentaenoate + AH2 + O2 = (11R)-hydroxy-(5Z,8Z,12E,14Z,17Z)-eicosapentaenoate + A + H2O. It carries out the reaction (5Z,8Z,11Z,14Z,17Z)-eicosapentaenoate + AH2 + O2 = (18S)-hydroxy-(5Z,8Z,11Z,14Z,16E)-eicosapentaenoate + A + H2O. The catalysed reaction is (5Z,8Z,11Z,14Z,17Z)-eicosapentaenoate + AH2 + O2 = (18R)-hydroxy-(5Z,8Z,11Z,14Z,16E)-eicosapentaenoate + A + H2O. It catalyses the reaction (5Z,8Z,11Z,14Z,17Z)-eicosapentaenoate + AH2 + O2 = (15R)-hydroxy-(5Z,8Z,11Z,13E,17Z)-eicosapentaenoate + A + H2O. The enzyme catalyses (5Z,8Z,11Z,14Z,17Z)-eicosapentaenoate + AH2 + O2 = (15S)-hydroxy-(5Z,8Z,11Z,13E,17Z)-eicosapentaenoate + A + H2O. It carries out the reaction (7Z,10Z,13Z,16Z,19Z)-docosapentaenoate + AH2 + O2 = 13R-hydroxy-(7Z,10Z,14E,16Z,19Z)-docosapentaenoate + A + H2O. The catalysed reaction is (4Z,7Z,10Z,13Z,16Z,19Z)-docosahexaenoate + AH2 + O2 = 13-hydroxy-(4Z,7Z,10Z,14E,16Z,19Z)-docosahexaenoate + A + H2O. It catalyses the reaction (5S)-hydroxy-(6E,8Z,11Z,14Z)-eicosatetraenoate + AH2 + O2 = (5S,15R)-dihydroxy-(6E,8Z,11Z,13E)-eicosatetraenoate + A + H2O. The enzyme catalyses (4Z,7Z,10Z,13Z,16Z,19Z)-docosahexaenoate + AH2 + O2 = 17R-hydroxy-(4Z,7Z,10Z,13Z,15E,19Z)-docosahexaenoate + A + H2O. It carries out the reaction (5S)-hydroxy-(6E,8Z,11Z,14Z)-eicosatetraenoate + AH2 + O2 = (5S,15S)-dihydroxy-(6E,8Z,11Z,13E)-eicosatetraenoate + A + H2O. The catalysed reaction is (5S)-hydroxy-(6E,8Z,11Z,14Z)-eicosatetraenoate + AH2 + O2 = (5S,11R)-dihydroxy-(6E,8Z,12E,14Z)-eicosatetraenoate + A + H2O. It catalyses the reaction 2-(5Z,8Z,11Z,14Z-eicosatetraenoyl)-glycerol + 2 O2 = 2-glyceryl-prostaglandin G2. The enzyme catalyses 2-glyceryl-prostaglandin G2 + AH2 = 2-glyceryl-prostaglandin H2 + A + H2O. It carries out the reaction (5Z,8Z,11Z,14Z)-eicosatetraenoate + O2 = (15R)-hydroperoxy-(5Z,8Z,11Z,13E)-eicosatetraenoate. The catalysed reaction is (5Z,8Z,11Z,14Z)-eicosatetraenoate + O2 = 11R-hydroperoxy-(5Z,8Z,12E,14Z)-eicosatetraenoate. It catalyses the reaction (9Z,12Z)-octadecadienoate + AH2 + O2 = (9R)-hydroxy-(10E,12Z)-octadecadienoate + A + H2O. The enzyme catalyses (9Z,12Z)-octadecadienoate + AH2 + O2 = (9S)-hydroxy-(10E,12Z)-octadecadienoate + A + H2O. It carries out the reaction (9Z,12Z)-octadecadienoate + AH2 + O2 = (13S)-hydroxy-(9Z,11E)-octadecadienoate + A + H2O. The catalysed reaction is (9Z,12Z)-octadecadienoate + AH2 + O2 = (13R)-hydroxy-(9Z,11E)-octadecadienoate + A + H2O. Its pathway is lipid metabolism; prostaglandin biosynthesis. In terms of biological role, dual cyclooxygenase and peroxidase in the biosynthesis pathway of prostanoids, a class of C20 oxylipins mainly derived from arachidonate ((5Z,8Z,11Z,14Z)-eicosatetraenoate, AA, C20:4(n-6)), with a particular role in the inflammatory response. The cyclooxygenase activity oxygenates AA to the hydroperoxy endoperoxide prostaglandin G2 (PGG2), and the peroxidase activity reduces PGG2 to the hydroxy endoperoxide prostaglandin H2 (PGH2), the precursor of all 2-series prostaglandins and thromboxanes. This complex transformation is initiated by abstraction of hydrogen at carbon 13 (with S-stereochemistry), followed by insertion of molecular O2 to form the endoperoxide bridge between carbon 9 and 11 that defines prostaglandins. The insertion of a second molecule of O2 (bis-oxygenase activity) yields a hydroperoxy group in PGG2 that is then reduced to PGH2 by two electrons. Similarly catalyzes successive cyclooxygenation and peroxidation of dihomo-gamma-linoleate (DGLA, C20:3(n-6)) and eicosapentaenoate (EPA, C20:5(n-3)) to corresponding PGH1 and PGH3, the precursors of 1- and 3-series prostaglandins. In an alternative pathway of prostanoid biosynthesis, converts 2-arachidonoyl lysophopholipids to prostanoid lysophopholipids, which are then hydrolyzed by intracellular phospholipases to release free prostanoids. Metabolizes 2-arachidonoyl glycerol yielding the glyceryl ester of PGH2, a process that can contribute to pain response. Generates lipid mediators from n-3 and n-6 polyunsaturated fatty acids (PUFAs) via a lipoxygenase-type mechanism. Oxygenates PUFAs to hydroperoxy compounds and then reduces them to corresponding alcohols. Plays a role in the generation of resolution phase interaction products (resolvins) during both sterile and infectious inflammation. Metabolizes docosahexaenoate (DHA, C22:6(n-3)) to 17R-HDHA, a precursor of the D-series resolvins (RvDs). As a component of the biosynthetic pathway of E-series resolvins (RvEs), converts eicosapentaenoate (EPA, C20:5(n-3)) primarily to 18S-HEPE that is further metabolized by ALOX5 and LTA4H to generate 18S-RvE1 and 18S-RvE2. In vascular endothelial cells, converts docosapentaenoate (DPA, C22:5(n-3)) to 13R-HDPA, a precursor for 13-series resolvins (RvTs) shown to activate macrophage phagocytosis during bacterial infection. In activated leukocytes, contributes to oxygenation of hydroxyeicosatetraenoates (HETE) to diHETES (5,15-diHETE and 5,11-diHETE). Can also use linoleate (LA, (9Z,12Z)-octadecadienoate, C18:2(n-6)) as substrate and produce hydroxyoctadecadienoates (HODEs) in a regio- and stereospecific manner, being (9R)-HODE ((9R)-hydroxy-(10E,12Z)-octadecadienoate) and (13S)-HODE ((13S)-hydroxy-(9Z,11E)-octadecadienoate) its major products. During neuroinflammation, plays a role in neuronal secretion of specialized preresolving mediators (SPMs) 15R-lipoxin A4 that regulates phagocytic microglia. The polypeptide is Prostaglandin G/H synthase 2 (PTGS2) (Cavia porcellus (Guinea pig)).